Consider the following 242-residue polypeptide: DNA repair protein RecO (242 aa).

This sequence belongs to the RecO family. In terms of assembly, monomer.

Its function is as follows. Involved in DNA repair and RecF pathway recombination. The sequence is that of DNA repair protein RecO from Shigella dysenteriae serotype 1 (strain Sd197).